We begin with the raw amino-acid sequence, 41 residues long: Large ribosomal subunit protein bL36 (41 aa).

Belongs to the bacterial ribosomal protein bL36 family.

The protein is Large ribosomal subunit protein bL36 of Rhizobium etli (strain CIAT 652).